The following is a 210-amino-acid chain: Riboflavin kinase (210 aa).

A compositionally biased stretch (pro residues) spans 1–11 (MRPSNPRPPVT). Residues 1-24 (MRPSNPRPPVTGPDSGPEAPFPIR) are disordered. Mg(2+)-binding residues include T44 and N46. E113 serves as the catalytic Nucleophile.

This sequence belongs to the flavokinase family. Zn(2+) is required as a cofactor. The cofactor is Mg(2+).

The catalysed reaction is riboflavin + ATP = FMN + ADP + H(+). It functions in the pathway cofactor biosynthesis; FMN biosynthesis; FMN from riboflavin (ATP route): step 1/1. Its function is as follows. Catalyzes the phosphorylation of riboflavin (vitamin B2) to form flavin mononucleotide (FMN) coenzyme. The sequence is that of Riboflavin kinase (fmn1) from Emericella nidulans (strain FGSC A4 / ATCC 38163 / CBS 112.46 / NRRL 194 / M139) (Aspergillus nidulans).